Consider the following 3433-residue polypeptide: Genome polyprotein (3433 aa).

The interaction with host EXOC1 stretch occupies residues 2–15 (SKKPGGPGKSRAVN). The Cytoplasmic portion of the chain corresponds to 2 to 108 (SKKPGGPGKS…SSKQKKRGGK (107 aa)). The interval 37 to 72 (LIDGKGPIRFVLALLAFFRFTAIAPTRAVLDRWRGV) is hydrophobic; homodimerization of capsid protein C. The propeptide at 106–123 (GGKTGIAVMIGLIASVGA) is ER anchor for the capsid protein C, removed in mature form by serine protease NS3. Residues 109–129 (TGIAVMIGLIASVGAVTLSNF) traverse the membrane as a helical segment. Residues 130–248 (QGKVMMTVNA…KATRYLVKTE (119 aa)) are Extracellular-facing. N-linked (GlcNAc...) asparagine; by host glycosylation occurs at N138. A helical membrane pass occupies residues 249–269 (SWILRNPGYALVAAVIGWMLG). The Cytoplasmic portion of the chain corresponds to 270–275 (SNTMQR). Residues 276-290 (VVFVVLLLLVAPAYS) traverse the membrane as a helical segment. The Extracellular portion of the chain corresponds to 291–743 (FNCLGMSNRD…QVFGGAFRSL (453 aa)). 6 disulfide bridges follow: C293/C320, C350/C406, C350/C411, C364/C395, C382/C406, and C382/C411. The tract at residues 388–401 (DRGWGNGCGLFGKG) is fusion peptide. N444 carries an N-linked (GlcNAc...) asparagine; by host glycan. 2 disulfides stabilise this stretch: C480-C578 and C595-C626. A helical membrane pass occupies residues 744–764 (FGGMSWITQGLLGALLLWMGI). The Cytoplasmic segment spans residues 765-770 (NARDRS). Residues 771-791 (IALTFLAVGGVLLFLSVNVHA) form a helical membrane-spanning segment. The Extracellular segment spans residues 792-1216 (DTGCAIDISR…AFAESNSGGD (425 aa)). 2 disulfides stabilise this stretch: C795–C806 and C846–C934. N-linked (GlcNAc...) asparagine; by host glycosylation is found at N921, N966, and N998. 4 disulfides stabilise this stretch: C970-C1014, C1071-C1120, C1082-C1103, and C1104-C1107. The helical transmembrane segment at 1217–1237 (VVHLALMATFKIQPVFMVASF) threads the bilayer. Residues 1238-1245 (LKARWTNQ) lie on the Cytoplasmic side of the membrane. Residues 1246–1268 (ENILLMLAAVFFQMAYHDARQIL) traverse the membrane as a helical segment. The Lumenal segment spans residues 1269 to 1288 (LWEIPDVLNSLAVAWMILRA). A helical membrane pass occupies residues 1289 to 1309 (ITFTTTSNVVVPLLALLTPGL). Topologically, residues 1310 to 1313 (RCLN) are cytoplasmic. The chain crosses the membrane as a helical span at residues 1314-1331 (LDVYRILLLMVGIGSLIR). The Lumenal segment spans residues 1332 to 1345 (EKRSAAAKKKGASL). Residues 1346–1366 (LCLALASTGLFNPMILAAGLI) form a helical membrane-spanning segment. At 1367–1375 (ACDPNRKRG) the chain is on the cytoplasmic side. A helical membrane pass occupies residues 1376–1396 (WPATEVMTAVGLMFAIVGGLA). The Lumenal portion of the chain corresponds to 1397–1399 (ELD). The chain crosses the membrane as a helical span at residues 1400-1420 (IDSMAIPMTIAGLMFAAFVIS). Over 1421-1477 (GKSTDMWIERTADISWESDAEITGSSERVDVRLDDDGNFQLMNDPGAPWKIWMLRMV) the chain is Cytoplasmic. The interacts with and activates NS3 protease stretch occupies residues 1428–1467 (IERTADISWESDAEITGSSERVDVRLDDDGNFQLMNDPGA). Residues 1478-1498 (CLAISAYTPWAILPSVVGFWI) constitute an intramembrane region (helical). Residues 1499–2174 (TLQYTKRGGV…RMALEELPDA (676 aa)) are Cytoplasmic-facing. In terms of domain architecture, Peptidase S7 spans 1506–1683 (GGVLWDTPSP…ERMDEPIPAG (178 aa)). Catalysis depends on charge relay system; for serine protease NS3 activity residues H1556, D1580, and S1640. The region spanning 1686-1842 (PEMLRKKQIT…ESNSPISDLQ (157 aa)) is the Helicase ATP-binding domain. Residues 1690–1693 (RKKQ) form an important for RNA-binding region. 1699 to 1706 (LHPGAGKT) is a binding site for ATP. Positions 1790-1793 (DEAH) match the DEAH box motif. The 166-residue stretch at 1853–2018 (GYEWITEYTG…GLIAQFYQPE (166 aa)) folds into the Helicase C-terminal domain. N6-acetyllysine; by host is present on K1894. Residues 2169–2173 (EELPD) form a regulates the ATPase activity of NS3 helicase region. The helical transmembrane segment at 2175–2195 (LQTIALIALLSVMTMGVFFLL) threads the bilayer. At 2196 to 2200 (MQRKG) the chain is on the lumenal side. The segment at residues 2201–2221 (IGKIGLGGAVLGVATFFCWMA) is an intramembrane region (helical). Residue E2222 is a topological domain, lumenal. Residues 2223–2243 (VPGTKIAGMLLLSLLLMIVLI) form a helical membrane-spanning segment. Residues 2244 to 2258 (PEPEKQRSQTDNQLA) are Cytoplasmic-facing. A helical membrane pass occupies residues 2259–2279 (VFLICVMTLVSAVAANEMGWL). The Lumenal segment spans residues 2280-2312 (DKTKSDISSLFGQRIEVKENFSMGEFLLDLRPA). The segment at residues 2313 to 2333 (TAWSLYAVTTAVLTPLLKHLI) is an intramembrane region (helical). Residues 2334 to 2380 (TSDYINTSLTSINVQASALFTLARGFPFVDVGVSALLLAAGCWGQVT) lie on the Lumenal side of the membrane. A helical membrane pass occupies residues 2381-2401 (LTVTVTAATLLFCHYAYMVPG). At 2402 to 2444 (WQAEAMRSAQRRTAAGIMKNAVVDGIVATDVPELERTTPIMQK) the chain is on the cytoplasmic side. The helical transmembrane segment at 2445–2465 (KVGQIMLILVSLAAVVVNPSV) threads the bilayer. Residues 2466-2470 (KTVRE) are Lumenal-facing. A helical transmembrane segment spans residues 2471-2491 (AGILITAAAVTLWENGASSVW). Residues 2492–3433 (NATTAIGLCH…DTTLVEDTVL (942 aa)) lie on the Cytoplasmic side of the membrane. In terms of domain architecture, mRNA cap 0-1 NS5-type MT spans 2529 to 2794 (GGAKGRTLGE…DVNLGSGTRA (266 aa)). Residue S2584 coordinates S-adenosyl-L-methionine. A Phosphoserine modification is found at S2584. Residue K2589 is the For 2'-O-MTase activity of the active site. S-adenosyl-L-methionine-binding residues include G2614, W2615, T2632, K2633, E2639, D2659, V2660, D2674, and I2675. D2674 serves as the catalytic For 2'-O-MTase activity. Catalysis depends on for 2'-O-MTase activity residues K2710 and E2746. Y2748 lines the S-adenosyl-L-methionine pocket. Positions 2917–2919 (REK) match the Nuclear localization signal motif. 4 residues coordinate Zn(2+): E2968, H2972, C2977, and C2980. A RdRp catalytic domain is found at 3058 to 3210 (GKIYADDTAG…KPLDDRFATS (153 aa)). H3245, C3261, and C3380 together coordinate Zn(2+). Positions 3431–3433 (TVL) match the PDZ-binding motif.

In the N-terminal section; belongs to the class I-like SAM-binding methyltransferase superfamily. mRNA cap 0-1 NS5-type methyltransferase family. As to quaternary structure, homodimer. Interacts (via N-terminus) with host EXOC1 (via C-terminus); this interaction results in EXOC1 degradation through the proteasome degradation pathway. Interacts with host DDX56; this interaction plays an important role in genomic RNA encapsidation. Forms heterodimers with envelope protein E in the endoplasmic reticulum and Golgi. In terms of assembly, homodimer; in the endoplasmic reticulum and Golgi. As to quaternary structure, homodimer; Homohexamer when secreted. NS1 interacts with NS4B. Interacts with host complement protein CFH; this interaction leads to the degradation of C3. Forms a heterodimer with serine protease NS3. May form homooligomers. Interacts with human SPCS1. In terms of assembly, forms a heterodimer with NS2B. Interacts with NS4B. Interacts with unphosphorylated RNA-directed RNA polymerase NS5; this interaction stimulates RNA-directed RNA polymerase NS5 guanylyltransferase activity. As to quaternary structure, interacts with host RTN3; this interaction is important to remodel host cell membranes. Interacts with Serine protease/Helicase NS3. Interacts with NS1. In terms of assembly, homodimer. Interacts with host STAT2; this interaction inhibits the phosphorylation of the latter, and, when all viral proteins are present (polyprotein), targets STAT2 for degradation. Specific enzymatic cleavages in vivo yield mature proteins. Cleavages in the lumen of endoplasmic reticulum are performed by host signal peptidase, whereas cleavages in the cytoplasmic side are performed by serine protease NS3. Signal cleavage at the 2K-4B site requires a prior NS3 protease-mediated cleavage at the 4A-2K site. Post-translationally, cleaved in post-Golgi vesicles by a host furin, releasing the mature small envelope protein M, and peptide pr. This cleavage is incomplete as up to 30% of viral particles still carry uncleaved prM. In terms of processing, N-glycosylated. N-glycosylated. The excreted form is glycosylated and this is required for efficient secretion of the protein from infected cells. Post-translationally, acetylated by host KAT5. Acetylation modulates NS3 RNA-binding and unwinding activities and plays an important positive role for viral replication. In terms of processing, phosphorylated on serines residues. This phosphorylation may trigger NS5 nuclear localization.

Its subcellular location is the virion. The protein localises to the host nucleus. The protein resides in the host cytoplasm. It is found in the host perinuclear region. It localises to the secreted. Its subcellular location is the virion membrane. The protein localises to the host endoplasmic reticulum membrane. It carries out the reaction Selective hydrolysis of -Xaa-Xaa-|-Yaa- bonds in which each of the Xaa can be either Arg or Lys and Yaa can be either Ser or Ala.. It catalyses the reaction RNA(n) + a ribonucleoside 5'-triphosphate = RNA(n+1) + diphosphate. The catalysed reaction is a ribonucleoside 5'-triphosphate + H2O = a ribonucleoside 5'-diphosphate + phosphate + H(+). The enzyme catalyses ATP + H2O = ADP + phosphate + H(+). It carries out the reaction a 5'-end (5'-triphosphoguanosine)-ribonucleoside in mRNA + S-adenosyl-L-methionine = a 5'-end (N(7)-methyl 5'-triphosphoguanosine)-ribonucleoside in mRNA + S-adenosyl-L-homocysteine. It catalyses the reaction a 5'-end (N(7)-methyl 5'-triphosphoguanosine)-ribonucleoside in mRNA + S-adenosyl-L-methionine = a 5'-end (N(7)-methyl 5'-triphosphoguanosine)-(2'-O-methyl-ribonucleoside) in mRNA + S-adenosyl-L-homocysteine + H(+). Its function is as follows. Plays a role in virus budding by binding to the cell membrane and gathering the viral RNA into a nucleocapsid that forms the core of a mature virus particle. During virus entry, may induce genome penetration into the host cytoplasm after hemifusion induced by the surface proteins. Can migrate to the cell nucleus where it modulates host functions. Overcomes the anti-viral effects of host EXOC1 by sequestering and degrading the latter through the proteasome degradation pathway. In terms of biological role, inhibits RNA silencing by interfering with host Dicer. Functionally, prevents premature fusion activity of envelope proteins in trans-Golgi by binding to envelope protein E at pH6.0. After virion release in extracellular space, gets dissociated from E dimers. Acts as a chaperone for envelope protein E during intracellular virion assembly by masking and inactivating envelope protein E fusion peptide. prM is the only viral peptide matured by host furin in the trans-Golgi network probably to avoid catastrophic activation of the viral fusion activity in acidic Golgi compartment prior to virion release. prM-E cleavage is inefficient, and many virions are only partially matured. These uncleaved prM would play a role in immune evasion. Its function is as follows. May play a role in virus budding. Exerts cytotoxic effects by activating a mitochondrial apoptotic pathway through M ectodomain. May display a viroporin activity. In terms of biological role, binds to host cell surface receptor and mediates fusion between viral and cellular membranes. Envelope protein is synthesized in the endoplasmic reticulum in the form of heterodimer with protein prM. They play a role in virion budding in the ER, and the newly formed immature particle is covered with 60 spikes composed of heterodimer between precursor prM and envelope protein E. The virion is transported to the Golgi apparatus where the low pH causes dissociation of PrM-E heterodimers and formation of E homodimers. prM-E cleavage is inefficient, and many virions are only partially matured. These uncleaved prM would play a role in immune evasion. Functionally, involved in immune evasion, pathogenesis and viral replication. Once cleaved off the polyprotein, is targeted to three destinations: the viral replication cycle, the plasma membrane and the extracellular compartment. Essential for viral replication. Required for formation of the replication complex and recruitment of other non-structural proteins to the ER-derived membrane structures. Excreted as a hexameric lipoparticle that plays a role against host immune response. Antagonizing the complement function. Binds to the host macrophages and dendritic cells. Inhibits signal transduction originating from Toll-like receptor 3 (TLR3). Component of the viral RNA replication complex that functions in virion assembly and antagonizes the host alpha/beta interferon antiviral response. Its function is as follows. Required cofactor for the serine protease function of NS3. May have membrane-destabilizing activity and form viroporins. In terms of biological role, displays three enzymatic activities: serine protease, NTPase and RNA helicase. NS3 serine protease, in association with NS2B, performs its autocleavage and cleaves the polyprotein at dibasic sites in the cytoplasm: C-prM, NS2A-NS2B, NS2B-NS3, NS3-NS4A, NS4A-2K and NS4B-NS5. NS3 RNA helicase binds RNA and unwinds dsRNA in the 3' to 5' direction. NS3 supports the separation of RNA daughter and template strands during viral replication. The helicase part is involved in the inhibition of phosphorylation of host STAT1, and thereby inhibition of host type-I IFN signaling. In addition, NS3 assists the initiation of replication by unwinding the RNA secondary structure in the 3' non-translated region (NTR). Inhibits STAT2 translocation in the nucleus after IFN-alpha treatment. Functionally, facilitates host membrane remodelling necessary for viral replication by interacting with host RTN3. Regulates the ATPase activity of the NS3 helicase activity. NS4A allows NS3 helicase to conserve energy during unwinding. Functions as a signal peptide for NS4B and is required for the interferon antagonism activity of the latter. Its function is as follows. Induces the formation of ER-derived membrane vesicles where the viral replication takes place. Inhibits interferon (IFN)-induced host STAT1 phosphorylation and nuclear translocation, thereby preventing the establishment of cellular antiviral state by blocking the IFN-alpha/beta pathway. Inhibits STAT2 translocation in the nucleus after IFN-alpha treatment. In terms of biological role, replicates the viral (+) and (-) genome, and performs the capping of genomes in the cytoplasm. NS5 methylates viral RNA cap at guanine N-7 and ribose 2'-O positions. Besides its role in RNA genome replication, also prevents the establishment of cellular antiviral state by blocking the interferon-alpha/beta (IFN-alpha/beta) signaling pathway. Inhibits host JAK1 and TYK2 phosphorylation, thereby preventing activation of JAK-STAT signaling pathway. This Aedes (Tropical bont tick) protein is Genome polyprotein.